We begin with the raw amino-acid sequence, 242 residues long: Large ribosomal subunit protein uL2 (242 aa).

The disordered stretch occupies residues 201–242 (VDHPFGGGRHQHTGKPTTVSRKKVPPGRKVGHISARRTGVRK). The span at 220-242 (SRKKVPPGRKVGHISARRTGVRK) shows a compositional bias: basic residues.

Belongs to the universal ribosomal protein uL2 family. Part of the 50S ribosomal subunit. Forms a bridge to the 30S subunit in the 70S ribosome.

One of the primary rRNA binding proteins. Required for association of the 30S and 50S subunits to form the 70S ribosome, for tRNA binding and peptide bond formation. It has been suggested to have peptidyltransferase activity; this is somewhat controversial. Makes several contacts with the 16S rRNA in the 70S ribosome. The sequence is that of Large ribosomal subunit protein uL2 from Methanocaldococcus jannaschii (strain ATCC 43067 / DSM 2661 / JAL-1 / JCM 10045 / NBRC 100440) (Methanococcus jannaschii).